The sequence spans 154 residues: Endoribonuclease YbeY (154 aa).

The Zn(2+) site is built by His-114, His-118, and His-124.

Belongs to the endoribonuclease YbeY family. It depends on Zn(2+) as a cofactor.

The protein localises to the cytoplasm. Single strand-specific metallo-endoribonuclease involved in late-stage 70S ribosome quality control and in maturation of the 3' terminus of the 16S rRNA. The protein is Endoribonuclease YbeY of Aggregatibacter actinomycetemcomitans (Actinobacillus actinomycetemcomitans).